The chain runs to 63 residues: Large ribosomal subunit protein uL29 (63 aa).

Belongs to the universal ribosomal protein uL29 family.

In Alcanivorax borkumensis (strain ATCC 700651 / DSM 11573 / NCIMB 13689 / SK2), this protein is Large ribosomal subunit protein uL29.